We begin with the raw amino-acid sequence, 244 residues long: MSVLDLHALNALEKDARAGALADTNAQLEALSAEARVSWALENLPGEFVLSSSFGIQAAVCLHLVTQQRPDIPVILTDTGYLFPETYRFIDELTEKLNLNLKIYRAEQSPAWQEARYGKLWEQGVEGIEKYNDINKVEPMNRALKELNAQTWFAGLRRDQSGSRANLPVLGVQRGVFKILPIIDWDNRTVYQYLQKHGLKYHPLWDEGYLSVGDTHTTRKWEPGMAEEETRFFGLKRECGLHEG.

Residue Cys239 is the Nucleophile; cysteine thiosulfonate intermediate of the active site.

It belongs to the PAPS reductase family. CysH subfamily.

It is found in the cytoplasm. The enzyme catalyses [thioredoxin]-disulfide + sulfite + adenosine 3',5'-bisphosphate + 2 H(+) = [thioredoxin]-dithiol + 3'-phosphoadenylyl sulfate. The protein operates within sulfur metabolism; hydrogen sulfide biosynthesis; sulfite from sulfate: step 3/3. In terms of biological role, catalyzes the formation of sulfite from phosphoadenosine 5'-phosphosulfate (PAPS) using thioredoxin as an electron donor. This chain is Phosphoadenosine 5'-phosphosulfate reductase, found in Cronobacter sakazakii (strain ATCC BAA-894) (Enterobacter sakazakii).